The chain runs to 1733 residues: Polyketide synthase Pks13 (1733 aa).

A Carrier 1 domain is found at 17-95 (ELTVPEMRQW…SLATRIIEGE (79 aa)). Position 55 is an O-(pantetheine 4'-phosphoryl)serine (Ser55). The Ketosynthase family 3 (KS3) domain occupies 116–541 (RVDIAIVGLS…GANAHVVVRE (426 aa)). Residue Cys287 is the Acyl-thioester intermediate; for beta-ketoacyl synthase activity of the active site. Residues His423 and His463 each act as for beta-ketoacyl synthase activity in the active site. Over residues 548–560 (VEKEPEPEPEPKA) the composition is skewed to basic and acidic residues. Positions 548 to 567 (VEKEPEPEPEPKAAAEPAEA) are disordered. Positions 713 to 1034 (VWVLAGFGAQ…MVSTMAQLYV (322 aa)) are acyltransferase. Ser801 (acyl-ester intermediate; for acyltransferase activity) is an active-site residue. A Carrier 2 domain is found at 1232-1309 (ETIAERLGLI…KLIEYAVEHR (78 aa)). Position 1266 is an O-(pantetheine 4'-phosphoryl)serine (Ser1266). The interval 1344 to 1368 (PVDSEAGVALPSPQNGEQPNPTGPA) is disordered. Residues 1470 to 1563 (PVFVFHPAGG…RFVGLIDAVR (94 aa)) form a thioesterase-like region. The For thioesterase-like activity role is filled by Ser1533.

4'-phosphopantetheine is transferred from CoA to specific serines of apo-Pks13 by PptT.

Its pathway is lipid metabolism; mycolic acid biosynthesis. The presence of FadD32 is necessary for the transfer of the acyl chain from the AMP carrier onto Pks13. Its function is as follows. Involved in the biosynthesis of mycolic acids. Forms, with FadD32, the initiation module of the mycolic condensation system. Synthesizes, in coupled reaction with FadD32, the biosynthetic precursors of mycolic acids, alpha-alkyl beta-ketoacids, via the condensation of two long chain fatty acid derivatives, a very long meromycoloyl-AMP and a shorter 2-carboxyacyl-CoA. The acyl chain of the acyl-AMP produced by FadD32 is specifically transferred onto the N-terminal ACP domain of Pks13, and then transferred onto the KS domain. The extender unit carboxyacyl-CoA is specifically loaded onto the AT domain, which catalyzes the covalent attachment of the carboxyacyl chain to its active site, and its subsequent transfer onto the P-pant arm of the C-terminal ACP domain. The KS domain catalyzes the condensation between the two loaded fatty acyl chains to produce an alpha-alkyl beta-ketothioester linked to the C-ACP domain. Then, the thioesterase-like domain acts as a transacylase and is responsible for both the release and the transfer of the alpha-alkyl beta-ketoacyl chain onto a polyol acceptor molecule, particularly trehalose, leading to the formation of the trehalose monomycolate precursor. The polypeptide is Polyketide synthase Pks13 (Mycobacterium tuberculosis (strain ATCC 25618 / H37Rv)).